The following is a 72-amino-acid chain: Translational regulator CsrA (72 aa).

Belongs to the CsrA/RsmA family. Homodimer; the beta-strands of each monomer intercalate to form a hydrophobic core, while the alpha-helices form wings that extend away from the core.

It is found in the cytoplasm. A translational regulator that binds mRNA to regulate translation initiation and/or mRNA stability. Usually binds in the 5'-UTR at or near the Shine-Dalgarno sequence preventing ribosome-binding, thus repressing translation. Its main target seems to be the major flagellin gene, while its function is anatagonized by FliW. The polypeptide is Translational regulator CsrA (Clostridium botulinum (strain 657 / Type Ba4)).